A 325-amino-acid chain; its full sequence is Phospho-N-acetylmuramoyl-pentapeptide-transferase (325 aa).

The next 10 membrane-spanning stretches (helical) occupy residues 9-29, 53-73, 77-97, 112-132, 154-174, 182-202, 204-224, 231-251, 257-277, and 305-325; these read ALLVSFFVALGGGRVLIPWLL, TMGGIIFLLSLVVTVVVFQAF, TLLLLITTLLFGLLGFLDDYL, KLLGQVIFSLVLTFGAVAFLG, LGNVFFFAATIFIMVGFANAV, GLCSSVTLIVMSFFAMTSLAL, EKGLFIFALALMGGLVGFLVY, VFMGDTGSLALGAAVAGFAVL, FLLLVGLIYVVETLSVIIQVI, and KIVLVFSLVTLIMVLISGYGL.

Belongs to the glycosyltransferase 4 family. MraY subfamily. Requires Mg(2+) as cofactor.

The protein resides in the cell membrane. It carries out the reaction UDP-N-acetyl-alpha-D-muramoyl-L-alanyl-gamma-D-glutamyl-meso-2,6-diaminopimeloyl-D-alanyl-D-alanine + di-trans,octa-cis-undecaprenyl phosphate = di-trans,octa-cis-undecaprenyl diphospho-N-acetyl-alpha-D-muramoyl-L-alanyl-D-glutamyl-meso-2,6-diaminopimeloyl-D-alanyl-D-alanine + UMP. It functions in the pathway cell wall biogenesis; peptidoglycan biosynthesis. In terms of biological role, catalyzes the initial step of the lipid cycle reactions in the biosynthesis of the cell wall peptidoglycan: transfers peptidoglycan precursor phospho-MurNAc-pentapeptide from UDP-MurNAc-pentapeptide onto the lipid carrier undecaprenyl phosphate, yielding undecaprenyl-pyrophosphoryl-MurNAc-pentapeptide, known as lipid I. In Carboxydothermus hydrogenoformans (strain ATCC BAA-161 / DSM 6008 / Z-2901), this protein is Phospho-N-acetylmuramoyl-pentapeptide-transferase.